The following is a 258-amino-acid chain: Adenosylcobinamide-GDP ribazoletransferase (258 aa).

Transmembrane regions (helical) follow at residues F41–S61, P65–F85, I115–M135, A136–S156, L197–A217, and C236–T256.

The protein belongs to the CobS family. Mg(2+) serves as cofactor.

The protein resides in the cell inner membrane. It carries out the reaction alpha-ribazole + adenosylcob(III)inamide-GDP = adenosylcob(III)alamin + GMP + H(+). It catalyses the reaction alpha-ribazole 5'-phosphate + adenosylcob(III)inamide-GDP = adenosylcob(III)alamin 5'-phosphate + GMP + H(+). It functions in the pathway cofactor biosynthesis; adenosylcobalamin biosynthesis; adenosylcobalamin from cob(II)yrinate a,c-diamide: step 7/7. Functionally, joins adenosylcobinamide-GDP and alpha-ribazole to generate adenosylcobalamin (Ado-cobalamin). Also synthesizes adenosylcobalamin 5'-phosphate from adenosylcobinamide-GDP and alpha-ribazole 5'-phosphate. The polypeptide is Adenosylcobinamide-GDP ribazoletransferase (Ralstonia nicotianae (strain ATCC BAA-1114 / GMI1000) (Ralstonia solanacearum)).